Here is a 23-residue protein sequence, read N- to C-terminus: ANQRLPPLSNDPDRCERAFVGNT.

Residues 1-23 form a disordered region; the sequence is ANQRLPPLSNDPDRCERAFVGNT.

The protein localises to the plastid. Its subcellular location is the chloroplast thylakoid lumen. The protein is Thylakoid lumenal 17.4 kDa protein of Spinacia oleracea (Spinach).